Consider the following 123-residue polypeptide: Cytochrome b-c1 complex subunit 7 (123 aa).

Belongs to the UQCRB/QCR7 family. Component of the ubiquinol-cytochrome c oxidoreductase (cytochrome b-c1 complex, complex III, CIII), a multisubunit enzyme composed of 3 respiratory subunits cytochrome b, cytochrome c1 and Rieske protein, 2 core protein subunits, and additional low-molecular weight protein subunits. The complex exists as an obligatory dimer and forms supercomplexes (SCs) in the inner mitochondrial membrane with cytochrome c oxidase (complex IV, CIV). Post-translationally, the N-terminus is blocked.

The protein localises to the mitochondrion inner membrane. Component of the ubiquinol-cytochrome c oxidoreductase, a multisubunit transmembrane complex that is part of the mitochondrial electron transport chain which drives oxidative phosphorylation. The respiratory chain contains 3 multisubunit complexes succinate dehydrogenase (complex II, CII), ubiquinol-cytochrome c oxidoreductase (cytochrome b-c1 complex, complex III, CIII) and cytochrome c oxidase (complex IV, CIV), that cooperate to transfer electrons derived from NADH and succinate to molecular oxygen, creating an electrochemical gradient over the inner membrane that drives transmembrane transport and the ATP synthase. The cytochrome b-c1 complex catalyzes electron transfer from ubiquinol to cytochrome c, linking this redox reaction to translocation of protons across the mitochondrial inner membrane, with protons being carried across the membrane as hydrogens on the quinol. In the process called Q cycle, 2 protons are consumed from the matrix, 4 protons are released into the intermembrane space and 2 electrons are passed to cytochrome c. This is Cytochrome b-c1 complex subunit 7 from Solanum tuberosum (Potato).